The chain runs to 512 residues: MNALIGQLLNAPVALLKGATIALSFFSLYLFGLVIYRLIFHPLAQYPGPLLGRITNLYAAYHAWKGDIHEDIWRCHQKHGNCIRYAPDRLAFDTAKAVSDIYGYGGNVRKSQVYDTLVHRTANTLTMRDKKQHAQRRRIMSHGFSDAAIRSFEPRVQELIQTLCDLLIVKDASADSEWSAPQDMAPWFDYLTFDIMSSLIFSASYDTLRQEKYRSVIRAIEESNVRVSVLLQAPIVTLFRSDKKLFSQSILGRNHFTRFIGSTVKERVQKSKLLADRDIFSYFQSSKAAANGDSMNMNELSGEAATLIVAGSDTTATTLAATMFYLSQSADIYHRVAQEVRQCFNSEDEIHAGSQLNACRLLRACIDEALRMSPPAGSALWREVEAGGITVNGRFVPEGYDVGVGIYAVHHNPTVYPQPFRFDPDRWLVDDTHDVRSAFMPFSLGTRSCIGKGLAQMEALLTLANIIWRYDFRAVPGGAVQPEYKLKDHVTGAKTGPVLQYRRIVRDKIMIG.

Residues 15 to 35 (LLKGATIALSFFSLYLFGLVI) traverse the membrane as a helical segment. Cysteine 449 is a heme binding site.

The protein belongs to the cytochrome P450 family. The cofactor is heme.

The protein resides in the membrane. It functions in the pathway secondary metabolite biosynthesis. Its function is as follows. Cytochrome P450 monooxygenase; part of the gene cluster that mediates the biosynthesis of oxaleimides, cytotoxic compounds containing an unusual disubstituted succinimide moiety. The first step of the pathway is provided by the HR-PKS poxF that serves in a new mode of collaborative biosynthesis with the PKS-NRPS poxE, by providing the olefin containing amino acid substrate via the synthesis of an ACP-bound dec-4-enoate. The cytochrome P450 monooxygenase poxM-catalyzed oxidation at the alpha-position creates the enzyme-bound 2-hydroxydec-4-enoyl-ACP thioester, which may be prone to spontaneous hydrolysis to yield 2-hydroxydec-4-enoic acid due to increased electrophilicity of the carbonyl. 2-hydroxydec-4-enoic acid can then be further oxidized by poxM to yield the alpha-ketoacid 2-oxodec-4-enoicacid, which is reductively aminated by the aminotransferase poxL to yield (S,E)-2-aminodec-4-enoic acid. The Hybrid PKS-NRPS synthetase poxE then performs condensation between the octaketide product of its PKS modules and the amino group of (S,E)-2-aminodec-4-enoic acid which is activated and incorporated by the adenylation domain. The resulting aminoacyl product can be cyclized by the Diels-Alderase PoxQ and reductively released by the reductive (R) domain of poxE to yield an aldehyde intermediate. The released aldehyde is then substrate for a Knoevenagel condensation by the hydrolyase poxO followed by an oxidation at the 5-position of the pyrrolidone ring. The presence of the olefin from the amino acid building block allows for migration of the substituted allyl group to occur. This allylic transposition reaction takes place in a conjugate addition, semipinacol-like fashion to yield a succinimide intermediate. Iterative two-electron oxidations of the C7 methyl of the succinimide intermediate to the carboxylic acid can be catalyzed by one of two remaining cytochrome P450 monooxygenasess poxC or poxD to yield oxaleimide A. Subsequent oxidation yields the maleimide scaffold oxaleimide I. Both oxaleimide A and oxaleimide I can undergo oxidative modifications in the decalin ring to yield the series of products oxaleimides B to H. This is Cytochrome P450 monooxygenase poxM from Penicillium oxalicum (strain 114-2 / CGMCC 5302) (Penicillium decumbens).